The chain runs to 103 residues: MARLALLLVLLAGTAVAGPPDAARQDELRHLVRQDCGSCHGLRMTGGLGRPITAAALAGRDVEDLSDVILDGMPGTAMPGWRPLLTEDDARWIADYLLKTETE.

Positions 1 to 17 (MARLALLLVLLAGTAVA) are cleaved as a signal peptide. Positions 36, 39, and 40 each coordinate heme c.

In terms of processing, binds 1 heme c group covalently per subunit.

Its subcellular location is the periplasm. Monoheme c-type cytochrome. This is Cytochrome c55X (nirC) from Paracoccus denitrificans (strain Pd 1222).